We begin with the raw amino-acid sequence, 150 residues long: Heavy metal-associated isoprenylated plant protein 24 (150 aa).

The HMA domain maps to 26–89; it reads QTVALRVARI…AAKSTKKKVE (64 aa). A metal cation contacts are provided by cysteine 37 and cysteine 40. Cysteine 147 is modified (cysteine methyl ester). Residue cysteine 147 is the site of S-farnesyl cysteine attachment. A propeptide spans 148–150 (removed in mature form); that stretch reads AIM.

The protein belongs to the HIPP family. Interacts with ZHD11/HB29.

In terms of biological role, heavy-metal-binding protein. This is Heavy metal-associated isoprenylated plant protein 24 from Arabidopsis thaliana (Mouse-ear cress).